The following is a 627-amino-acid chain: Membrane protein insertase YidC (627 aa).

The next 6 membrane-spanning stretches (helical) occupy residues 3–23 (KNTV…SWLN), 376–396 (WGLI…PLAY), 450–470 (LPML…PTTI), 502–522 (FYGN…ILYI), 534–554 (EGMA…LFFF), and 558–578 (ASGL…QYMS).

It belongs to the OXA1/ALB3/YidC family. Type 1 subfamily. In terms of assembly, interacts with the Sec translocase complex via SecD. Specifically interacts with transmembrane segments of nascent integral membrane proteins during membrane integration.

The protein localises to the cell inner membrane. In terms of biological role, required for the insertion and/or proper folding and/or complex formation of integral membrane proteins into the membrane. Involved in integration of membrane proteins that insert both dependently and independently of the Sec translocase complex, as well as at least some lipoproteins. Aids folding of multispanning membrane proteins. The polypeptide is Membrane protein insertase YidC (Porphyromonas gingivalis (strain ATCC BAA-308 / W83)).